The sequence spans 804 residues: ABC transporter aclQ (804 aa).

Helical transmembrane passes span 3 to 23 (LAVL…ISYL), 52 to 72 (FTAI…SITI), 97 to 117 (IAVF…PFSP), 119 to 139 (LSHS…LAMF), 155 to 175 (LQLG…ALYF), 206 to 226 (HGGW…LWPS), 239 to 259 (FVLL…LGIV), 349 to 369 (LVFQ…YFLI), and 373 to 393 (AFYS…TIYM). The region spanning 236 to 518 (IFCFVLLVIQ…FGSFYTQVQN (283 aa)) is the ABC transmembrane type-1 domain. Asn-460 carries N-linked (GlcNAc...) asparagine glycosylation. 2 helical membrane passes run 464–484 (NLLF…QISA) and 489–509 (VAMF…LNFF). The 235-residue stretch at 552–786 (VEFTHVNFAY…NGMYSQMWAK (235 aa)) folds into the ABC transporter domain. 585 to 592 (GESGSGKS) is an ATP binding site. Asn-639 and Asn-797 each carry an N-linked (GlcNAc...) asparagine glycan.

It belongs to the ABC transporter superfamily. ABCB family. Heavy Metal importer (TC 3.A.1.210) subfamily.

It localises to the membrane. ABC transporter; part of the gene cluster that mediates the biosynthesis of aspirochlorine (or antibiotic A30641), an unusual halogenated spiro compound with distinctive antifungal properties due to selective inhibition of protein biosynthesis, and which is also active against bacteria, viruses, and murine tumor cells. This Aspergillus oryzae (strain ATCC 42149 / RIB 40) (Yellow koji mold) protein is ABC transporter aclQ.